Consider the following 104-residue polypeptide: Cuticle protein 67, isoform B (104 aa).

7 consecutive repeat copies span residues 7–10 (AAPA), 14–17 (AAPA), 21–24 (AAPA), 28–31 (AAPA), 85–88 (AAPA), 92–95 (AAPA), and 98–101 (AAPA).

In terms of biological role, component of the cuticle of migratory locust which contains more than 100 different structural proteins. This is Cuticle protein 67, isoform B from Locusta migratoria (Migratory locust).